A 99-amino-acid chain; its full sequence is UPF0235 protein PM1313 (99 aa).

It belongs to the UPF0235 family.

The protein is UPF0235 protein PM1313 of Pasteurella multocida (strain Pm70).